A 330-amino-acid polypeptide reads, in one-letter code: UPF0324 membrane protein PG_2004 (330 aa).

The next 9 helical transmembrane spans lie at 13–31, 36–58, 71–93, 97–114, 126–148, 158–180, 248–270, 285–307, and 312–329; these read IAYP…GSLV, PFTS…LIFG, VLLQ…LASG, MMFT…GWFI, SALI…GPIL, ALGT…GHWL, VPLF…EAYF, LTLS…VGVR, and GLFL…FILL.

This sequence belongs to the UPF0324 family.

The protein resides in the cell membrane. The sequence is that of UPF0324 membrane protein PG_2004 from Porphyromonas gingivalis (strain ATCC BAA-308 / W83).